Consider the following 405-residue polypeptide: Calsequestrin-1 (405 aa).

An N-terminal signal peptide occupies residues 1–34 (MRATDRMGARAVSELRLALLFVLVLGTPRLGVQG). Residue Y43 is modified to Phosphotyrosine. Position 81 is a phosphoserine (S81). T124 carries the post-translational modification Phosphothreonine. Position 216 is a phosphoserine (S216). N-linked (GlcNAc...) asparagine glycosylation occurs at N350. The segment at 382 to 405 (EGEINTEDDDDDDDDDDDDDDDDD) is disordered.

This sequence belongs to the calsequestrin family. Monomer; increases in response to a depletion of intracellular calcium. Homodimer. Homotetramer and homopolymer. Can form linear homooligomers. Ca(2+) ions promote oligomerization. Interacts (via C-terminal end and preferentially with the monomeric form) with STIM1; this interaction increases in response to a depletion of intracellular calcium, decreases both STIM1 aggregation and clustering, interaction of STIM1 with ORAI1 and store-operated Ca(2+) entry (SOCE) activity. Interacts with ASPH and TRDN. Post-translationally, N-glycosylated. In terms of tissue distribution, detected in skeletal muscle (at protein level). Detected in skeletal muscle.

The protein localises to the endoplasmic reticulum. Its subcellular location is the sarcoplasmic reticulum. It localises to the sarcoplasmic reticulum lumen. It is found in the sarcoplasmic reticulum membrane. The protein resides in the mitochondrion matrix. Functionally, calsequestrin is a high-capacity, moderate affinity, calcium-binding protein and thus acts as an internal calcium store in muscle. Calcium ions are bound by clusters of acidic residues at the protein surface, often at the interface between subunits. Can bind around 80 Ca(2+) ions. Regulates the release of lumenal Ca(2+) via the calcium release channel RYR1; this plays an important role in triggering muscle contraction. Negatively regulates store-operated Ca(2+) entry (SOCE) activity. This Mus musculus (Mouse) protein is Calsequestrin-1 (Casq1).